Reading from the N-terminus, the 144-residue chain is Protein BUD31 homolog (144 aa).

A Nuclear localization signal motif is present at residues 2 to 10 (PKVRRSRKP).

The protein belongs to the BUD31 (G10) family.

The protein localises to the nucleus. The protein is Protein BUD31 homolog of Branchiostoma belcheri (Amphioxus).